Consider the following 122-residue polypeptide: Ribosome-binding factor A (122 aa).

Belongs to the RbfA family. Monomer. Binds 30S ribosomal subunits, but not 50S ribosomal subunits or 70S ribosomes.

Its subcellular location is the cytoplasm. Its function is as follows. One of several proteins that assist in the late maturation steps of the functional core of the 30S ribosomal subunit. Associates with free 30S ribosomal subunits (but not with 30S subunits that are part of 70S ribosomes or polysomes). Required for efficient processing of 16S rRNA. May interact with the 5'-terminal helix region of 16S rRNA. The chain is Ribosome-binding factor A from Cupriavidus pinatubonensis (strain JMP 134 / LMG 1197) (Cupriavidus necator (strain JMP 134)).